Reading from the N-terminus, the 234-residue chain is Cell polarity protein alp11 (234 aa).

Positions 4 to 88 (ITLFIKSSSA…IVVEDTRPPH (85 aa)) constitute a Ubiquitin-like domain. Positions 174–216 (VPEINNDNLWVGVEFDEPVGKNDGTVSGKRYFNAKNKHGSFLR) constitute a CAP-Gly domain. Ser213 is subject to Phosphoserine.

This sequence belongs to the TBCB family. In terms of assembly, binds to monomeric alpha-tubulin. Interacts with alp21.

Its subcellular location is the cytoplasm. It localises to the cytoskeleton. Required for microtubule function and cell polarity. Involved in the proper folding of alpha-tubulin. The polypeptide is Cell polarity protein alp11 (alp11) (Schizosaccharomyces pombe (strain 972 / ATCC 24843) (Fission yeast)).